The chain runs to 146 residues: Hemoglobin subunit beta (146 aa).

Val-1 carries the N-acetylvaline modification. Residues 2–146 (HLTGEEKSAV…VANALAHKYH (145 aa)) form the Globin domain. The residue at position 12 (Thr-12) is a Phosphothreonine. Residue Ser-44 is modified to Phosphoserine. At Lys-59 the chain carries N6-acetyllysine. His-63 lines the heme b pocket. An N6-acetyllysine modification is found at Lys-82. His-92 is a binding site for heme b. An S-nitrosocysteine modification is found at Cys-93. Lys-144 is modified (N6-acetyllysine).

It belongs to the globin family. As to quaternary structure, heterotetramer of two alpha chains and two beta chains. Red blood cells.

In terms of biological role, involved in oxygen transport from the lung to the various peripheral tissues. In Mico argentatus (Silvery marmoset), this protein is Hemoglobin subunit beta (HBB).